The primary structure comprises 384 residues: 8-amino-7-oxononanoate synthase (384 aa).

Arg21 lines the substrate pocket. Pyridoxal 5'-phosphate is bound at residue 108–109; it reads GF. His133 is a binding site for substrate. Positions 179, 207, and 233 each coordinate pyridoxal 5'-phosphate. Lys236 carries the post-translational modification N6-(pyridoxal phosphate)lysine. Residue Thr352 participates in substrate binding.

It belongs to the class-II pyridoxal-phosphate-dependent aminotransferase family. BioF subfamily. Homodimer. Requires pyridoxal 5'-phosphate as cofactor.

The enzyme catalyses 6-carboxyhexanoyl-[ACP] + L-alanine + H(+) = (8S)-8-amino-7-oxononanoate + holo-[ACP] + CO2. It participates in cofactor biosynthesis; biotin biosynthesis. In terms of biological role, catalyzes the decarboxylative condensation of pimeloyl-[acyl-carrier protein] and L-alanine to produce 8-amino-7-oxononanoate (AON), [acyl-carrier protein], and carbon dioxide. The chain is 8-amino-7-oxononanoate synthase from Escherichia fergusonii (strain ATCC 35469 / DSM 13698 / CCUG 18766 / IAM 14443 / JCM 21226 / LMG 7866 / NBRC 102419 / NCTC 12128 / CDC 0568-73).